Reading from the N-terminus, the 236-residue chain is Purine nucleoside phosphorylase DeoD-type (236 aa).

His-4 serves as a coordination point for a purine D-ribonucleoside. Residues Gly-20, Arg-24, Arg-43, and Arg-87–Ser-90 contribute to the phosphate site. A purine D-ribonucleoside-binding positions include Glu-179 to Glu-181 and Ser-203 to Asp-204. Asp-204 (proton donor) is an active-site residue.

It belongs to the PNP/UDP phosphorylase family. Homohexamer; trimer of homodimers.

It catalyses the reaction a purine D-ribonucleoside + phosphate = a purine nucleobase + alpha-D-ribose 1-phosphate. The enzyme catalyses a purine 2'-deoxy-D-ribonucleoside + phosphate = a purine nucleobase + 2-deoxy-alpha-D-ribose 1-phosphate. Functionally, catalyzes the reversible phosphorolytic breakdown of the N-glycosidic bond in the beta-(deoxy)ribonucleoside molecules, with the formation of the corresponding free purine bases and pentose-1-phosphate. The sequence is that of Purine nucleoside phosphorylase DeoD-type from Limosilactobacillus reuteri (strain DSM 20016) (Lactobacillus reuteri).